Here is a 112-residue protein sequence, read N- to C-terminus: Protein FAM32A (112 aa).

The segment at 23 to 58 (TKRKKKKKDKDKAKLLEAMGTSKKNEEEKRRGLDKR) is disordered. Positions 45–58 (KKNEEEKRRGLDKR) are enriched in basic and acidic residues.

This sequence belongs to the FAM32 family.

It is found in the nucleus. May induce G2 arrest and apoptosis. May also increase cell sensitivity to apoptotic stimuli. The sequence is that of Protein FAM32A (FAM32A) from Bos taurus (Bovine).